The following is a 332-amino-acid chain: MKFGIEFVPDMKYYELEYYVKLAEDSGFDYTWITDHYNNRNVYSMLTILALKTRTIKLGPGVTNPYHISPALTASAIGTINEISGGRAVLGIGAGDKVTFERIGITWEKPLKRMREAVEIIRQLTEGKAVKYDGEIFKFNGAKLGFKPGSIPIYIGAQGPKMLQLAAELGDGVLINASHPKDFEVAKENIDAGLAKAGKSRDAFDTVAYASMSVDKDRDKARNAARIVVAFIVAGSPPTVLERHGLSEDAVNAVREALNNAFTKGDWGGVAKSVTDEMIDIFSISGTPDDVIERINELSKAGVTQVVAGSPIGPDKKKSIQLIGKEIIPKLK.

It belongs to the mer family.

The protein resides in the cytoplasm. It carries out the reaction 5-methyl-5,6,7,8-tetrahydromethanopterin + oxidized coenzyme F420-(gamma-L-Glu)(n) + H(+) = 5,10-methylenetetrahydromethanopterin + reduced coenzyme F420-(gamma-L-Glu)(n). It functions in the pathway metabolic intermediate metabolism; lactate oxidation. In terms of biological role, catalyzes the oxidation of methyl-H(4)MPT to methylene-H(4)MPT. The protein is 5,10-methylenetetrahydromethanopterin reductase of Archaeoglobus fulgidus (strain ATCC 49558 / DSM 4304 / JCM 9628 / NBRC 100126 / VC-16).